The following is a 419-amino-acid chain: Serine hydroxymethyltransferase (419 aa).

Residues Leu121 and Gly125–Leu127 each bind (6S)-5,6,7,8-tetrahydrofolate. N6-(pyridoxal phosphate)lysine is present on Lys230. Ser355–Phe357 contributes to the (6S)-5,6,7,8-tetrahydrofolate binding site.

Belongs to the SHMT family. As to quaternary structure, homodimer. It depends on pyridoxal 5'-phosphate as a cofactor.

Its subcellular location is the cytoplasm. It carries out the reaction (6R)-5,10-methylene-5,6,7,8-tetrahydrofolate + glycine + H2O = (6S)-5,6,7,8-tetrahydrofolate + L-serine. The protein operates within one-carbon metabolism; tetrahydrofolate interconversion. It functions in the pathway amino-acid biosynthesis; glycine biosynthesis; glycine from L-serine: step 1/1. Its function is as follows. Catalyzes the reversible interconversion of serine and glycine with tetrahydrofolate (THF) serving as the one-carbon carrier. This reaction serves as the major source of one-carbon groups required for the biosynthesis of purines, thymidylate, methionine, and other important biomolecules. Also exhibits THF-independent aldolase activity toward beta-hydroxyamino acids, producing glycine and aldehydes, via a retro-aldol mechanism. The polypeptide is Serine hydroxymethyltransferase (Streptococcus equi subsp. zooepidemicus (strain MGCS10565)).